Here is a 609-residue protein sequence, read N- to C-terminus: Membrane-bound O-acyltransferase GUP2 (609 aa).

The N-terminal stretch at 1 to 18 (MSMLRIWSCIVHFFSVQA) is a signal peptide. Residues 19–75 (LDSRIKPDIEFKRRQRIFINSSKEENGSSSSAVTVTRNPVLSSNSPSPPLWNTWEFR) lie on the Lumenal side of the membrane. The helical transmembrane segment at 76-96 (LYYLAFTVVVPFMIKAALATS) threads the bilayer. Over 97 to 133 (SESNPNYYKFSGLLAHGWILGRKVDNSDPQYRFFRSN) the chain is Cytoplasmic. The chain crosses the membrane as a helical span at residues 134–154 (FFLLAILILLQIILKKVFVKF). Residues 155–169 (SKIPKTKFDFACGLV) are Lumenal-facing. A helical transmembrane segment spans residues 170–190 (FVCFMYGINSVKLFTHAFIFF). The Cytoplasmic segment spans residues 191–200 (TLAHSLKRKR). The helical transmembrane segment at 201–221 (LIAAFAIWSYGIFTLFINQKM) threads the bilayer. At 222 to 324 (KNLPFNNIAI…VAEHHIQDYN (103 aa)) the chain is on the lumenal side. Residues 325-345 (FINFIAYITYAPLFLVGPIIT) traverse the membrane as a helical segment. The Cytoplasmic portion of the chain corresponds to 346–371 (FNDYLYQSENKLPSLTKKNIGFYALK). Residues 372–392 (VFSSLLLMEIILHYIYVGAIA) form a helical membrane-spanning segment. At 393 to 406 (RTKAWNNDTPLQQA) the chain is on the lumenal side. A helical transmembrane segment spans residues 407–427 (MIALFNLNIMYLKLLIPWRLF). The Cytoplasmic segment spans residues 428–474 (RLWAMVDGIDAPENMLRCVDNNYSTVGFWRAWHTSFNKWVIRYIYVP). A helical membrane pass occupies residues 475 to 495 (FGGSNNKILTSFAVFSFVAIW). Residue His-496 is part of the active site. The Lumenal segment spans residues 496 to 502 (HDIQLRV). Residues 503–523 (LFWGWLTVLLLLGETYITNCF) traverse the membrane as a helical segment. Over 524–533 (SRYRFRSWYR) the chain is Cytoplasmic. A helical transmembrane segment spans residues 534 to 554 (FVCGIGAAINICMMMIINVYG). At 555–575 (FCLGAEGTKLLLKGIFNNSHS) the chain is on the lumenal side. The helical transmembrane segment at 576 to 596 (PEFLTAVMVSLFIAVQVMFEI) threads the bilayer. Residues 597 to 609 (REEEKRHGINLKC) are Cytoplasmic-facing.

Belongs to the membrane-bound acyltransferase family.

The protein resides in the endoplasmic reticulum membrane. In terms of biological role, probable membrane-bound O-acyltransferase. Together with GUP1, has an influence on the chemical composition of the yeast extracellular matrix (yECM) in yeast multicellular aggregates, such as biofilms and colonies. The chain is Membrane-bound O-acyltransferase GUP2 (GUP2) from Saccharomyces cerevisiae (strain ATCC 204508 / S288c) (Baker's yeast).